Reading from the N-terminus, the 509-residue chain is Pituitary homeobox homolog Ptx1 (509 aa).

Over residues 70 to 98 (NGAGSAGSAESATTTSTALSSGSTGSSTV) the composition is skewed to low complexity. Disordered regions lie at residues 70 to 125 (NGAG…SSVS), 148 to 171 (QDLV…PKHE), and 204 to 273 (LNNF…HFTS). Positions 227 to 242 (RSVNETTIKTENISSS) are enriched in polar residues. A compositionally biased stretch (basic and acidic residues) spans 243-258 (GHDEPMTTSGEEPKND). A compositionally biased stretch (basic residues) spans 259–269 (KKNKRQRRQRT). Positions 262 to 322 (KRQRRQRTHF…KNRRAKWRKR (61 aa)) form a DNA-binding region, homeobox. An OAR motif is present at residues 460–473 (SSIATLRLKAKQHA). Residues 464–470 (TLRLKAK) carry the Nuclear localization signal motif.

Belongs to the paired homeobox family. Bicoid subfamily.

It localises to the nucleus. In terms of biological role, appears to control physiological cell functions rather than pattern formation during embryogenesis. This chain is Pituitary homeobox homolog Ptx1 (Ptx1), found in Drosophila melanogaster (Fruit fly).